A 176-amino-acid chain; its full sequence is O-acetyl-ADP-ribose deacetylase (176 aa).

One can recognise a Macro domain in the interval Met-1–Asp-175. Substrate is bound by residues Asp-11–Ile-12, Asn-25, Gly-33–Asp-35, and Ser-122–Tyr-126. Catalysis depends on Asp-35, which acts as the Proton acceptor.

Belongs to the MacroD-type family. YmdB subfamily. As to quaternary structure, homodimer. Interacts with RNase III.

It catalyses the reaction 3''-O-acetyl-ADP-D-ribose + H2O = ADP-D-ribose + acetate + H(+). The enzyme catalyses 2''-O-acetyl-ADP-D-ribose + H2O = ADP-D-ribose + acetate + H(+). Deacetylates O-acetyl-ADP ribose to yield ADP-ribose and free acetate. Down-regulates ribonuclease 3 (RNase III) activity. Acts by interacting directly with the region of the ribonuclease that is required for dimerization/activation. This Cronobacter turicensis (strain DSM 18703 / CCUG 55852 / LMG 23827 / z3032) protein is O-acetyl-ADP-ribose deacetylase.